The following is an 81-amino-acid chain: UPF0180 protein YkuS (81 aa).

This sequence belongs to the UPF0180 family.

The sequence is that of UPF0180 protein YkuS (ykuS) from Bacillus subtilis (strain 168).